Here is a 55-residue protein sequence, read N- to C-terminus: A-type ATP synthase subunit G (55 aa).

In terms of assembly, has multiple subunits, A(3), B(3), C, D, E, F, G, I and K(x); there may be a few other subunits as well.

Its subcellular location is the cell membrane. Its function is as follows. Component of the A-type ATP synthase that produces ATP from ADP in the presence of a proton gradient across the membrane. The protein is A-type ATP synthase subunit G (atpG) of Methanosarcina mazei (strain ATCC BAA-159 / DSM 3647 / Goe1 / Go1 / JCM 11833 / OCM 88) (Methanosarcina frisia).